The following is a 119-amino-acid chain: uncharacterized protein (119 aa).

Cys-13 is a catalytic residue.

The protein belongs to the ArsC family.

This is an uncharacterized protein from Escherichia coli (strain K12).